The following is a 130-amino-acid chain: Small ribosomal subunit protein uS11 (130 aa).

The protein belongs to the universal ribosomal protein uS11 family. As to quaternary structure, part of the 30S ribosomal subunit. Interacts with proteins S7 and S18. Binds to IF-3.

Located on the platform of the 30S subunit, it bridges several disparate RNA helices of the 16S rRNA. Forms part of the Shine-Dalgarno cleft in the 70S ribosome. In Syntrophus aciditrophicus (strain SB), this protein is Small ribosomal subunit protein uS11.